The primary structure comprises 277 residues: Urease accessory protein UreD (277 aa).

Belongs to the UreD family. In terms of assembly, ureD, UreF and UreG form a complex that acts as a GTP-hydrolysis-dependent molecular chaperone, activating the urease apoprotein by helping to assemble the nickel containing metallocenter of UreC. The UreE protein probably delivers the nickel.

The protein resides in the cytoplasm. Its function is as follows. Required for maturation of urease via the functional incorporation of the urease nickel metallocenter. The sequence is that of Urease accessory protein UreD from Rhodopseudomonas palustris (strain BisB18).